Consider the following 479-residue polypeptide: Anaerobic nitric oxide reductase flavorubredoxin (479 aa).

Positions 30–210 are zinc metallo-hydrolase; that stretch reads LRGSSYNSYL…PFSRLVTPKI (181 aa). His79, Glu81, Asp83, His147, Asp166, and His227 together coordinate Fe cation. In terms of domain architecture, Flavodoxin-like spans 254 to 393; it reads ITIFYDTMSN…LCREHGREIA (140 aa). FMN contacts are provided by residues 260–264 and 342–369; these read TMSNN and AFGS…EMSL. Residues 423–474 enclose the Rubredoxin-like domain; sequence GPRMQCSVCQWIYDPAKGEPMQDVAPGTPWSEVPDNFLCPECSLGKDVFEEL. The Fe cation site is built by Cys428, Cys431, Cys461, and Cys464.

It in the N-terminal section; belongs to the zinc metallo-hydrolase group 3 family. Homotetramer. Requires Fe cation as cofactor. FMN serves as cofactor.

It localises to the cytoplasm. It participates in nitrogen metabolism; nitric oxide reduction. Its function is as follows. Anaerobic nitric oxide reductase; uses NADH to detoxify nitric oxide (NO), protecting several 4Fe-4S NO-sensitive enzymes. Has at least 2 reductase partners, only one of which (NorW, flavorubredoxin reductase) has been identified. NO probably binds to the di-iron center; electrons enter from the NorW at rubredoxin and are transferred sequentially to the FMN center and the di-iron center. Also able to function as an aerobic oxygen reductase. In Escherichia coli O139:H28 (strain E24377A / ETEC), this protein is Anaerobic nitric oxide reductase flavorubredoxin.